The chain runs to 617 residues: MEHNPKSQLKLLVTHGKEQGYLTYAEVNDHLPEEIIDSEQIDDIIQMINDMGIQVVEEAPDADDLILNEINTDTDEDAVEAATQVLSSVESELGRTTDPVRMYMREMGTVELLTREGEIDIAKRIEEGINQVQSSVSEYPEAITYLLEQYDRIKTGQIRLSDIITGFVDPNAEEIFSHSTSAIHIGSEILDNITNDSNENEDENEDENEDEDENSIDPELANEKFRELRKQYTNTSNTIKNKNRNHQDSLLEIYNLSEIFKQFRLVPKQFDHLVNNMRNMMNRVRKQERKIMKLCIEECKIPKKIFLKIFSGKETDQNWFKKEQSSNQSWSKKLEEIKEKVFSSMKKLKQIEKETGLTIEQVKDINKRMSIGEAKAKRAKKEMVEANLRLVISIAKKYTNRGLQFLDLIQEGNIGLMKAVDKFEYRRGYKFSTYATWWIRQAITRSIADQARTIRIPVHMIETINKLNRISRQMLQEIGREPTPEELSEKMLIPEDKIRKVLKIAKEPISMETPIGDDDDSHLGDFIEDTTLELPLDSATSESLRSATHDVLSGLTAREAKVLRMRFGIDMNTDHTLEEVGKQFDVTRERIRQIEAKALRKLRHPSRSEVLRSFLDD.

The interval 192–222 (NITNDSNENEDENEDENEDEDENSIDPELAN) is disordered. Acidic residues predominate over residues 198-216 (NENEDENEDENEDEDENSI). The sigma-70 factor domain-2 stretch occupies residues 383 to 453 (MVEANLRLVI…TRSIADQART (71 aa)). Residues 407-410 (DLIQ) carry the Interaction with polymerase core subunit RpoC motif. The interval 462 to 538 (ETINKLNRIS…DTTLELPLDS (77 aa)) is sigma-70 factor domain-3. Positions 551–604 (VLSGLTAREAKVLRMRFGIDMNTDHTLEEVGKQFDVTRERIRQIEAKALRKLRH) are sigma-70 factor domain-4. Positions 577-596 (LEEVGKQFDVTRERIRQIEA) form a DNA-binding region, H-T-H motif.

This sequence belongs to the sigma-70 factor family. RpoD/SigA subfamily. As to quaternary structure, interacts transiently with the RNA polymerase catalytic core.

Its subcellular location is the cytoplasm. In terms of biological role, sigma factors are initiation factors that promote the attachment of RNA polymerase to specific initiation sites and are then released. This sigma factor is the primary sigma factor during exponential growth. This chain is RNA polymerase sigma factor RpoD, found in Buchnera aphidicola subsp. Schizaphis graminum (strain Sg).